We begin with the raw amino-acid sequence, 351 residues long: Methylthioribose-1-phosphate isomerase (351 aa).

Substrate is bound by residues 51–53 (RGA), Arg-94, and Gln-199. Residue Asp-240 is the Proton donor of the active site. 250–251 (NK) is a binding site for substrate.

The protein belongs to the EIF-2B alpha/beta/delta subunits family. MtnA subfamily. In terms of assembly, homodimer.

It catalyses the reaction 5-(methylsulfanyl)-alpha-D-ribose 1-phosphate = 5-(methylsulfanyl)-D-ribulose 1-phosphate. Its pathway is amino-acid biosynthesis; L-methionine biosynthesis via salvage pathway; L-methionine from S-methyl-5-thio-alpha-D-ribose 1-phosphate: step 1/6. In terms of biological role, catalyzes the interconversion of methylthioribose-1-phosphate (MTR-1-P) into methylthioribulose-1-phosphate (MTRu-1-P). This is Methylthioribose-1-phosphate isomerase from Bacillus thuringiensis (strain Al Hakam).